The primary structure comprises 438 residues: Battenin (438 aa).

The disordered stretch occupies residues 1–29 (MGGCAGSRRRLLDSEEEETAPEPRPPRSY). Over 1–37 (MGGCAGSRRRLLDSEEEETAPEPRPPRSYHKGALWKN) the chain is Cytoplasmic. Residue Ser14 is modified to Phosphoserine. The chain crosses the membrane as a helical span at residues 38–58 (VMGFWLLGLCNNFSYVVMLSA). Topologically, residues 59–127 (AHDILSHQRA…GLHLLPYSPR (69 aa)) are lumenal. The interval 68–89 (ASGNQSHVDPDPPPTAHNSSSR) is disordered. Residues Asn71 and Asn85 are each glycosylated (N-linked (GlcNAc...) asparagine). Residues 128–148 (VLVSGICAAGSFILVAFSHSV) traverse the membrane as a helical segment. The Cytoplasmic segment spans residues 149-151 (GTS). The helical transmembrane segment at 152-172 (LCGVVLASISSGVGEVTFLSL) threads the bilayer. At 173–182 (TAFYPRAVIS) the chain is on the lumenal side. The helical transmembrane segment at 183 to 203 (WWSSGTGGAGLMGALSYLGLT) threads the bilayer. The Cytoplasmic portion of the chain corresponds to 204 to 277 (QAGLSPQHTL…NLSLQERWTV (74 aa)). A disordered region spans residues 236–267 (PQDPGGEEEAETSARQPLIDSETPESKPDSSS). The Lysosomal targeting motif motif lies at 242-244 (EEE). The Lysosomal targeting motif. Required for AP1G1, AP2A2 and AP3D1 interaction motif lies at 253–254 (LI). A helical membrane pass occupies residues 278-298 (FKGLLWYIVPLVLVYFAEYFI). Residues 299 to 346 (NQGLFELLFFRNTSLNHAQQYRWYQMLYQAGVFVSRSSLHCCRIRFTW) are Lumenal-facing. The N-linked (GlcNAc...) asparagine glycan is linked to Asn310. A helical membrane pass occupies residues 347–367 (VLALLQCLNLAFLLVDVWFSF). Over 368–438 (LPSIYLVFLI…PLHDFLCHLS (71 aa)) the chain is Cytoplasmic. The Lysosomal targeting motif signature appears at 409–419 (MAAACISDTLG). The residue at position 435 (Cys435) is a Cysteine methyl ester. Residue Cys435 is the site of S-farnesyl cysteine attachment. A propeptide spans 436-438 (HLS) (removed in mature form).

The protein belongs to the battenin family. In terms of assembly, interacts with DCTN1, KIF3A, RAB7A and RILP. Interacts with CLN5. Highly glycosylated. In terms of processing, farnesylation is important for trafficking to lysosomes.

It localises to the lysosome membrane. The protein localises to the late endosome. The protein resides in the lysosome. Mediates microtubule-dependent, anterograde transport connecting the Golgi network, endosomes, autophagosomes, lysosomes and plasma membrane, and participates in several cellular processes such as regulation of lysosomal pH, lysosome protein degradation, receptor-mediated endocytosis, autophagy, transport of proteins and lipids from the TGN, apoptosis and synaptic transmission. Facilitates the proteins transport from trans-Golgi network (TGN)-to other membrane compartments such as transport of microdomain-associated proteins to the plasma membrane, IGF2R transport to the lysosome where it regulates the CTSD release leading to regulation of CTSD maturation and thereby APP intracellular processing. Moreover regulates CTSD activity in response to osmotic stress. Also binds galactosylceramide and transports it from the trans Golgi to the rafts, which may have immediate and downstream effects on cell survival by modulating ceramide synthesis. At the plasma membrane, regulates actin-dependent events including filopodia formation, cell migration, and pinocytosis through ARF1-CDC42 pathway and also the cytoskeleton organization through interaction with MYH10 and fodrin leading to the regulation of the plasma membrane association of Na+, K+ ATPase complex. Regulates synaptic transmission in the amygdala, hippocampus, and cerebellum through regulation of synaptic vesicles density and their proximity to active zones leading to modulation of short-term plasticity and age-dependent anxious behavior, learning and memory. Regulates autophagic vacuoles (AVs) maturation by modulating the trafficking between endocytic and autophagolysosomal/lysosomal compartments, which involves vesicle fusion leading to regulation of degradation process. Also participates in cellular homeostasis of compounds such as, water, ions, amino acids, proteins and lipids in several tissue namely in brain and kidney through regulation of their transport and synthesis. This Canis lupus familiaris (Dog) protein is Battenin.